A 251-amino-acid polypeptide reads, in one-letter code: 3-deoxy-manno-octulosonate cytidylyltransferase (251 aa).

This sequence belongs to the KdsB family.

It localises to the cytoplasm. The enzyme catalyses 3-deoxy-alpha-D-manno-oct-2-ulosonate + CTP = CMP-3-deoxy-beta-D-manno-octulosonate + diphosphate. It participates in nucleotide-sugar biosynthesis; CMP-3-deoxy-D-manno-octulosonate biosynthesis; CMP-3-deoxy-D-manno-octulosonate from 3-deoxy-D-manno-octulosonate and CTP: step 1/1. Its pathway is bacterial outer membrane biogenesis; lipopolysaccharide biosynthesis. In terms of biological role, activates KDO (a required 8-carbon sugar) for incorporation into bacterial lipopolysaccharide in Gram-negative bacteria. This is 3-deoxy-manno-octulosonate cytidylyltransferase from Vibrio vulnificus (strain YJ016).